We begin with the raw amino-acid sequence, 126 residues long: Large ribosomal subunit protein bL17 (126 aa).

Belongs to the bacterial ribosomal protein bL17 family. In terms of assembly, part of the 50S ribosomal subunit. Contacts protein L32.

This is Large ribosomal subunit protein bL17 from Coxiella burnetii (strain CbuG_Q212) (Coxiella burnetii (strain Q212)).